Consider the following 91-residue polypeptide: Defensin-like protein 95 (91 aa).

An N-terminal signal peptide occupies residues 1–27; sequence MGSLKLSTFAIVVCLSILLISPIEVNG. Disulfide bonds link C31/C76, C38/C63, C47/C73, and C51/C75.

The protein belongs to the DEFL family.

The protein localises to the secreted. The protein is Defensin-like protein 95 of Arabidopsis thaliana (Mouse-ear cress).